The chain runs to 111 residues: uncharacterized protein (111 aa).

The disordered stretch occupies residues 66–94 (PVPTATPSLPRSGFTSSAKKIKESRKQKS). The segment covering 70 to 83 (ATPSLPRSGFTSSA) has biased composition (polar residues).

The protein localises to the plastid. The protein resides in the chloroplast. This is an uncharacterized protein from Chlamydomonas reinhardtii (Chlamydomonas smithii).